A 387-amino-acid polypeptide reads, in one-letter code: S-adenosylmethionine synthase (387 aa).

H15 contacts ATP. D17 contacts Mg(2+). E43 is a binding site for K(+). The L-methionine site is built by E56 and Q99. Residues 99 to 109 (QSPDIAQGVNN) are flexible loop. Residues 166-168 (DAK), 232-233 (RF), D241, 247-248 (RK), A264, and K268 each bind ATP. D241 is a binding site for L-methionine. An L-methionine-binding site is contributed by K272.

Belongs to the AdoMet synthase family. Homotetramer; dimer of dimers. It depends on Mg(2+) as a cofactor. K(+) serves as cofactor.

The protein localises to the cytoplasm. The enzyme catalyses L-methionine + ATP + H2O = S-adenosyl-L-methionine + phosphate + diphosphate. It functions in the pathway amino-acid biosynthesis; S-adenosyl-L-methionine biosynthesis; S-adenosyl-L-methionine from L-methionine: step 1/1. Functionally, catalyzes the formation of S-adenosylmethionine (AdoMet) from methionine and ATP. The overall synthetic reaction is composed of two sequential steps, AdoMet formation and the subsequent tripolyphosphate hydrolysis which occurs prior to release of AdoMet from the enzyme. This is S-adenosylmethionine synthase from Methylobacillus flagellatus (strain ATCC 51484 / DSM 6875 / VKM B-1610 / KT).